A 253-amino-acid polypeptide reads, in one-letter code: Ribulose bisphosphate carboxylase large chain (253 aa).

The substrate site is built by Asn35 and Thr85. The Proton acceptor role is filled by Lys87. A substrate-binding site is contributed by Lys89. Mg(2+) contacts are provided by Lys113, Asp115, and Glu116. Lys113 carries the N6-carboxylysine modification. The active-site Proton acceptor is His206. Substrate is bound by residues Arg207 and His239.

This sequence belongs to the RuBisCO large chain family. Type I subfamily. In terms of assembly, heterohexadecamer of 8 large chains and 8 small chains; disulfide-linked. The disulfide link is formed within the large subunit homodimers. It depends on Mg(2+) as a cofactor. In terms of processing, the disulfide bond which can form in the large chain dimeric partners within the hexadecamer appears to be associated with oxidative stress and protein turnover.

It is found in the plastid. It localises to the chloroplast. It carries out the reaction 2 (2R)-3-phosphoglycerate + 2 H(+) = D-ribulose 1,5-bisphosphate + CO2 + H2O. It catalyses the reaction D-ribulose 1,5-bisphosphate + O2 = 2-phosphoglycolate + (2R)-3-phosphoglycerate + 2 H(+). Functionally, ruBisCO catalyzes two reactions: the carboxylation of D-ribulose 1,5-bisphosphate, the primary event in carbon dioxide fixation, as well as the oxidative fragmentation of the pentose substrate in the photorespiration process. Both reactions occur simultaneously and in competition at the same active site. In Magnolia latahensis (Apocynophyllum latahense), this protein is Ribulose bisphosphate carboxylase large chain (rbcL).